We begin with the raw amino-acid sequence, 540 residues long: Suppressor of tumorigenicity 7 protein-like (540 aa).

Transmembrane regions (helical) follow at residues 24 to 44 (WSWT…VYVL), 68 to 88 (FYVA…IFEW), 475 to 495 (LPFF…LAML), and 502 to 522 (LMGV…GFFA).

Belongs to the ST7 family.

It localises to the membrane. The polypeptide is Suppressor of tumorigenicity 7 protein-like (st7l) (Danio rerio (Zebrafish)).